Consider the following 364-residue polypeptide: C2 calcium-dependent domain-containing protein 4A (364 aa).

Disordered regions lie at residues 118 to 175 (GSPS…PPRC) and 192 to 242 (AGRS…RPER). Residues 220 to 233 (SPGSPTQAPVTSLS) are compositionally biased toward polar residues. The C2 domain occupies 254 to 364 (AGGALRLAAE…ELLLGPLLLL (111 aa)).

The protein belongs to the C2CD4 family.

The protein localises to the nucleus. May be involved in inflammatory process. May regulate cell architecture and adhesion. This is C2 calcium-dependent domain-containing protein 4A (C2CD4A) from Bos taurus (Bovine).